A 44-amino-acid polypeptide reads, in one-letter code: Metallothionein-4 (44 aa).

The protein belongs to the metallothionein superfamily. Type 5 family.

Functionally, this protein binds cations of several transition elements. Thought to be involved in metal ion homeostasis. This Drosophila melanogaster (Fruit fly) protein is Metallothionein-4 (MtnD).